The primary structure comprises 181 residues: ATP-dependent protease subunit HslV (181 aa).

Residue threonine 9 is part of the active site. Positions 166, 169, and 172 each coordinate Na(+).

Belongs to the peptidase T1B family. HslV subfamily. In terms of assembly, a double ring-shaped homohexamer of HslV is capped on each side by a ring-shaped HslU homohexamer. The assembly of the HslU/HslV complex is dependent on binding of ATP.

The protein localises to the cytoplasm. The catalysed reaction is ATP-dependent cleavage of peptide bonds with broad specificity.. With respect to regulation, allosterically activated by HslU binding. In terms of biological role, protease subunit of a proteasome-like degradation complex believed to be a general protein degrading machinery. The polypeptide is ATP-dependent protease subunit HslV (Staphylococcus aureus (strain bovine RF122 / ET3-1)).